Consider the following 303-residue polypeptide: Aspartate carbamoyltransferase catalytic subunit (303 aa).

Carbamoyl phosphate is bound by residues R49 and T50. K77 contributes to the L-aspartate binding site. 3 residues coordinate carbamoyl phosphate: R99, H126, and Q129. L-aspartate contacts are provided by R159 and R211. Carbamoyl phosphate is bound by residues S252 and P253.

This sequence belongs to the aspartate/ornithine carbamoyltransferase superfamily. ATCase family. Heterododecamer (2C3:3R2) of six catalytic PyrB chains organized as two trimers (C3), and six regulatory PyrI chains organized as three dimers (R2).

The enzyme catalyses carbamoyl phosphate + L-aspartate = N-carbamoyl-L-aspartate + phosphate + H(+). It participates in pyrimidine metabolism; UMP biosynthesis via de novo pathway; (S)-dihydroorotate from bicarbonate: step 2/3. In terms of biological role, catalyzes the condensation of carbamoyl phosphate and aspartate to form carbamoyl aspartate and inorganic phosphate, the committed step in the de novo pyrimidine nucleotide biosynthesis pathway. This Listeria monocytogenes serotype 4b (strain F2365) protein is Aspartate carbamoyltransferase catalytic subunit.